A 214-amino-acid polypeptide reads, in one-letter code: GTP-binding nuclear protein GSP1 (214 aa).

Residues 4 to 172 (RELTYKICLI…LHLARIFTGR (169 aa)) enclose the Small GTPase Ran-type domain. 17 to 22 (GVGKTT) is a binding site for GTP. The interval 34 to 42 (KNYNATVGA) is switch-I. GTP is bound by residues G66, 121 to 124 (NKID), and 151 to 153 (SAK). The tract at residues 66–82 (GQEKKAVLKDVYYIGAS) is switch-II.

The protein belongs to the small GTPase superfamily. Ran family. In terms of assembly, found in a nuclear export complex with RanGTP, exportin and pre-miRNA.

The protein localises to the nucleus. In terms of biological role, GTP-binding protein involved in nucleocytoplasmic transport. Required for the import of protein into the nucleus and also for RNA export. The sequence is that of GTP-binding nuclear protein GSP1 (GSP1) from Encephalitozoon cuniculi (strain GB-M1) (Microsporidian parasite).